The sequence spans 66 residues: Conotoxin Cl14.1b (66 aa).

A signal peptide spans 1 to 19 (MNVTVMFLVLLLTMPLTDG). The propeptide occupies 20–47 (FNIRAINGGELFGLVQRDAGNALDHGFY).

The protein belongs to the conotoxin L superfamily. In terms of processing, contains 2 disulfide bonds. Expressed by the venom duct.

The protein localises to the secreted. The protein is Conotoxin Cl14.1b of Californiconus californicus (California cone).